The sequence spans 348 residues: tRNA N6-adenosine threonylcarbamoyltransferase (348 aa).

2 residues coordinate Fe cation: H109 and H113. Substrate contacts are provided by residues 136 to 140 (TVSGG), D169, G182, D186, and N284. D312 is a binding site for Fe cation.

This sequence belongs to the KAE1 / TsaD family. Fe(2+) serves as cofactor.

The protein resides in the cytoplasm. It carries out the reaction L-threonylcarbamoyladenylate + adenosine(37) in tRNA = N(6)-L-threonylcarbamoyladenosine(37) in tRNA + AMP + H(+). Required for the formation of a threonylcarbamoyl group on adenosine at position 37 (t(6)A37) in tRNAs that read codons beginning with adenine. Is involved in the transfer of the threonylcarbamoyl moiety of threonylcarbamoyl-AMP (TC-AMP) to the N6 group of A37, together with TsaE and TsaB. TsaD likely plays a direct catalytic role in this reaction. The chain is tRNA N6-adenosine threonylcarbamoyltransferase from Chlorobium luteolum (strain DSM 273 / BCRC 81028 / 2530) (Pelodictyon luteolum).